The following is a 267-amino-acid chain: Serine acetyltransferase (267 aa).

This sequence belongs to the transferase hexapeptide repeat family.

Its subcellular location is the cytoplasm. The enzyme catalyses L-serine + acetyl-CoA = O-acetyl-L-serine + CoA. It participates in amino-acid biosynthesis; L-cysteine biosynthesis; L-cysteine from L-serine: step 1/2. This is Serine acetyltransferase (cysE) from Haemophilus influenzae (strain ATCC 51907 / DSM 11121 / KW20 / Rd).